The sequence spans 87 residues: MNSLLMITACLALIGTVWAKEGYIVNYHDGCKYECYKLGDNDYCLRECKLRYGKGAGGYCYAFGCWCTHLYEQAVVWPLPKKRCNGK.

Residues Met1–Ala19 form the signal peptide. In terms of domain architecture, LCN-type CS-alpha/beta spans Lys20–Asn85. Cystine bridges form between Cys31–Cys84, Cys35–Cys60, Cys44–Cys65, and Cys48–Cys67. Asn85 carries the post-translational modification Asparagine amide.

The protein belongs to the long (4 C-C) scorpion toxin superfamily. Sodium channel inhibitor family. Beta subfamily. In terms of tissue distribution, expressed by the venom gland.

The protein localises to the secreted. In terms of biological role, beta toxins bind voltage-independently at site-4 of sodium channels (Nav) and shift the voltage of activation toward more negative potentials thereby affecting sodium channel activation and promoting spontaneous and repetitive firing. The chain is Toxin Cll4 from Centruroides limpidus (Mexican scorpion).